Reading from the N-terminus, the 323-residue chain is Putative CDC123-like protein L884 (323 aa).

It belongs to the CDC123 family.

This Acanthamoeba polyphaga mimivirus (APMV) protein is Putative CDC123-like protein L884.